A 232-amino-acid polypeptide reads, in one-letter code: GTP cyclohydrolase III (232 aa).

It belongs to the archaeal-type GTP cyclohydrolase family.

The catalysed reaction is GTP + 3 H2O = 2-amino-5-formylamino-6-(5-phospho-D-ribosylamino)pyrimidin-4(3H)-one + 2 phosphate + 2 H(+). Functionally, catalyzes the formation of 2-amino-5-formylamino-6-ribofuranosylamino-4(3H)-pyrimidinone ribonucleotide monophosphate and inorganic phosphate from GTP. Also has an independent pyrophosphate phosphohydrolase activity. The chain is GTP cyclohydrolase III from Saccharolobus islandicus (strain Y.N.15.51 / Yellowstone #2) (Sulfolobus islandicus).